The sequence spans 84 residues: Large ribosomal subunit protein bL27 (84 aa).

The interval 1–22 is disordered; it reads MAHKKGGGSTKNGRDSNPKYLG.

This sequence belongs to the bacterial ribosomal protein bL27 family.

The protein is Large ribosomal subunit protein bL27 of Prosthecochloris aestuarii (strain DSM 271 / SK 413).